A 227-amino-acid chain; its full sequence is Putative molybdenum transport system permease protein YvgM (227 aa).

5 helical membrane passes run 17 to 37 (VVLSFQVAAVAGIVVIILGTL), 57 to 77 (FMLPLVLPPTVVGFILIVIFG), 94 to 114 (VIFTWWAAVIASAVVAFPLMY), 142 to 162 (VFIHISVPLAYPSLLTGSILS), and 201 to 221 (TLAWAWVVCIVVISFLMLFFI). An ABC transmembrane type-1 domain is found at 17–221 (VVLSFQVAAV…VISFLMLFFI (205 aa)).

Belongs to the binding-protein-dependent transport system permease family. CysTW subfamily.

The protein localises to the cell membrane. Could be part of the binding-protein-dependent transport system for molybdenum; probably responsible for the translocation of the substrate across the membrane. The sequence is that of Putative molybdenum transport system permease protein YvgM (yvgM) from Bacillus subtilis (strain 168).